Reading from the N-terminus, the 391-residue chain is Formate-dependent phosphoribosylglycinamide formyltransferase (391 aa).

Residues 20–21 (EL) and E80 contribute to the N(1)-(5-phospho-beta-D-ribosyl)glycinamide site. ATP contacts are provided by residues R112, K153, 158–163 (SSGKGQ), 193–196 (EGFI), and E201. The 190-residue stretch at 117–306 (RLAAETLGLP…EFALHVRAIQ (190 aa)) folds into the ATP-grasp domain. Residues E265 and E277 each coordinate Mg(2+). N(1)-(5-phospho-beta-D-ribosyl)glycinamide-binding positions include D284, K354, and 361 to 362 (RR).

It belongs to the PurK/PurT family. Homodimer.

The catalysed reaction is N(1)-(5-phospho-beta-D-ribosyl)glycinamide + formate + ATP = N(2)-formyl-N(1)-(5-phospho-beta-D-ribosyl)glycinamide + ADP + phosphate + H(+). It participates in purine metabolism; IMP biosynthesis via de novo pathway; N(2)-formyl-N(1)-(5-phospho-D-ribosyl)glycinamide from N(1)-(5-phospho-D-ribosyl)glycinamide (formate route): step 1/1. Involved in the de novo purine biosynthesis. Catalyzes the transfer of formate to 5-phospho-ribosyl-glycinamide (GAR), producing 5-phospho-ribosyl-N-formylglycinamide (FGAR). Formate is provided by PurU via hydrolysis of 10-formyl-tetrahydrofolate. This Shewanella baltica (strain OS185) protein is Formate-dependent phosphoribosylglycinamide formyltransferase.